A 165-amino-acid chain; its full sequence is Anterior gradient protein 3 (165 aa).

A signal peptide spans 1 to 20 (MLHSALALCLLLITVSSNLA). Residues 162–165 (QSEL) carry the Prevents secretion from ER motif.

It belongs to the AGR family. In terms of assembly, interacts with LYPD3 and DAG1 (alphaDAG1). As to expression, expressed in the ciliated cells of the airway epithelium. Not detected in the mucous cells.

The protein resides in the endoplasmic reticulum. It localises to the cytoplasm. In terms of biological role, required for calcium-mediated regulation of ciliary beat frequency and mucociliary clearance in the airway. Might be involved in the regulation of intracellular calcium in tracheal epithelial cells. The protein is Anterior gradient protein 3 of Mus musculus (Mouse).